Here is a 593-residue protein sequence, read N- to C-terminus: MNSSLKDKLAVLPDKPGCYLMKNASGEIIYVGKAKVLKNRVRSYFTGSHNGKTQLLVSEIVDFEYIVVSSAIEALILECNLIKEHDPRYNVMLRDDKTYPYIKITNEAQPRLEITRKVLKDKAKYFGPYPNAGDASEVKKLLDRLYPLRKCRNMPKQVCLYYHLGQCLAPCVYEVSAEENQRLVDQISQFLDGGHEEMKQTLTEKMLQAAENMEFERAKEYRDQIKSIEAVMEKQKITFTDTIDRDIIGFAVEKGWMCIQVFYMRKGKMIERQTTSFPYYGSETEDFMSYVSQFYYDKQNALPKEILLPQESEPELLAEWLGIKVHAPKRGKKHELVKMATENARIALQEKFALMSKDDARTVQAVHNLGHILGIPVPHRIEAFDNSNIQGTEPVSAMIVFTDGRPDKKEYRKFKIKTVEGPDDYGSMREVVRRRYSRLLKENQPMPDLIVIDGGKGQISAAMDVLENELGLYIPVCGLAKDEKHRTAQLMYGDPPEPVNLRRDSYEFYLLQRIQDEVHRFVITFHRQSRTKTMLSSQLDEIPGIGEKRRKLLFSHFGSLKKMREATVEDFRQLGIGDKLAKEIIGHLRKLDT.

Residues 14–91 (DKPGCYLMKN…IKEHDPRYNV (78 aa)) enclose the GIY-YIG domain. Positions 196 to 231 (EEMKQTLTEKMLQAAENMEFERAKEYRDQIKSIEAV) constitute a UVR domain.

Belongs to the UvrC family. In terms of assembly, interacts with UvrB in an incision complex.

The protein resides in the cytoplasm. In terms of biological role, the UvrABC repair system catalyzes the recognition and processing of DNA lesions. UvrC both incises the 5' and 3' sides of the lesion. The N-terminal half is responsible for the 3' incision and the C-terminal half is responsible for the 5' incision. The protein is UvrABC system protein C of Brevibacillus brevis (strain 47 / JCM 6285 / NBRC 100599).